The primary structure comprises 184 residues: Tumor necrosis factor receptor superfamily member 17 (184 aa).

The Extracellular portion of the chain corresponds to 1-54; sequence MLQMAGQCSQNEYFDSLLHACIPCQLRCSSNTPPLTCQRYCNASVTNSVKGTNA. A TNFR-Cys repeat occupies 7 to 41; the sequence is QCSQNEYFDSLLHACIPCQLRCSSNTPPLTCQRYC. Disulfide bonds link Cys-8-Cys-21, Cys-24-Cys-37, and Cys-28-Cys-41. The helical; Signal-anchor for type III membrane protein transmembrane segment at 55–77 threads the bilayer; it reads ILWTCLGLSLIISLAVFVLMFLL. Residues 78 to 184 lie on the Cytoplasmic side of the membrane; that stretch reads RKINSEPLKD…TEIEKSISAR (107 aa).

In terms of assembly, associates with TRAF1, TRAF2, TRAF3, TRAF5 and TRAF6. Expressed in mature B-cells, but not in T-cells or monocytes.

Its subcellular location is the cell membrane. It localises to the endomembrane system. Functionally, receptor for TNFSF13B/BLyS/BAFF and TNFSF13/APRIL. Promotes B-cell survival and plays a role in the regulation of humoral immunity. Activates NF-kappa-B and JNK. This is Tumor necrosis factor receptor superfamily member 17 (TNFRSF17) from Homo sapiens (Human).